Here is a 384-residue protein sequence, read N- to C-terminus: Zinc finger CCCH domain-containing protein 12 (384 aa).

2 disordered regions span residues M1–D32 and W46–S81. The span at P50 to P60 shows a compositional bias: polar residues. The span at S70–S81 shows a compositional bias: low complexity. 2 consecutive C3H1-type zinc fingers follow at residues F91–E118 and S172–A200. Positions L211–G231 are disordered. Residues G212–G231 show a composition bias toward gly residues. The C3H1-type 3 zinc-finger motif lies at N260–A288. Residues E299 to H335 form a disordered region. Residues N309–L329 show a composition bias toward polar residues.

The sequence is that of Zinc finger CCCH domain-containing protein 12 from Arabidopsis thaliana (Mouse-ear cress).